Consider the following 88-residue polypeptide: Small ribosomal subunit protein uS17 (88 aa).

Belongs to the universal ribosomal protein uS17 family. As to quaternary structure, part of the 30S ribosomal subunit.

Functionally, one of the primary rRNA binding proteins, it binds specifically to the 5'-end of 16S ribosomal RNA. This chain is Small ribosomal subunit protein uS17, found in Ruthia magnifica subsp. Calyptogena magnifica.